The primary structure comprises 348 residues: Centromere protein N (348 aa).

Belongs to the CENP-N/CHL4 family.

The protein resides in the nucleus. Its subcellular location is the chromosome. It localises to the centromere. Its function is as follows. Probable component of a centromeric complex involved in assembly of kinetochore proteins, mitotic progression and chromosome segregation. This is Centromere protein N (cenpn) from Xenopus tropicalis (Western clawed frog).